A 473-amino-acid chain; its full sequence is Argininosuccinate lyase (473 aa).

Belongs to the lyase 1 family. Argininosuccinate lyase subfamily.

It localises to the cytoplasm. The enzyme catalyses 2-(N(omega)-L-arginino)succinate = fumarate + L-arginine. Its pathway is amino-acid biosynthesis; L-arginine biosynthesis; L-arginine from L-ornithine and carbamoyl phosphate: step 3/3. This Bordetella pertussis (strain Tohama I / ATCC BAA-589 / NCTC 13251) protein is Argininosuccinate lyase.